The following is a 545-amino-acid chain: Chaperonin GroEL 1 (545 aa).

ATP contacts are provided by residues threonine 30–proline 33, lysine 51, aspartate 87–threonine 91, glycine 415, and aspartate 495.

The protein belongs to the chaperonin (HSP60) family. In terms of assembly, forms a cylinder of 14 subunits composed of two heptameric rings stacked back-to-back. Interacts with the co-chaperonin GroES.

The protein localises to the cytoplasm. It catalyses the reaction ATP + H2O + a folded polypeptide = ADP + phosphate + an unfolded polypeptide.. Its function is as follows. Together with its co-chaperonin GroES, plays an essential role in assisting protein folding. The GroEL-GroES system forms a nano-cage that allows encapsulation of the non-native substrate proteins and provides a physical environment optimized to promote and accelerate protein folding. The sequence is that of Chaperonin GroEL 1 from Rhizobium meliloti (strain 1021) (Ensifer meliloti).